The primary structure comprises 166 residues: Large ribosomal subunit protein uL10 (166 aa).

It belongs to the universal ribosomal protein uL10 family. Part of the ribosomal stalk of the 50S ribosomal subunit. The N-terminus interacts with L11 and the large rRNA to form the base of the stalk. The C-terminus forms an elongated spine to which L12 dimers bind in a sequential fashion forming a multimeric L10(L12)X complex.

In terms of biological role, forms part of the ribosomal stalk, playing a central role in the interaction of the ribosome with GTP-bound translation factors. This chain is Large ribosomal subunit protein uL10, found in Bacillus velezensis (strain DSM 23117 / BGSC 10A6 / LMG 26770 / FZB42) (Bacillus amyloliquefaciens subsp. plantarum).